The chain runs to 575 residues: FAD-dependent monooxygenase rstn6 (575 aa).

An N-terminal signal peptide occupies residues 1–17; the sequence is MYDVIVIGAGWCGLVAA. Ile-106 is an FAD binding site. 2 N-linked (GlcNAc...) asparagine glycosylation sites follow: Asn-239 and Asn-295.

Belongs to the FAD-binding monooxygenase family. Requires FAD as cofactor.

It functions in the pathway antifungal biosynthesis. FAD-dependent monooxygenase; part of the gene cluster that mediates the biosynthesis of the tetrahydropyranyl antifungal agent restricticin that acts as an inhibitor of CYP51 and blocks the ergosterol biosynthesis. The highly reducing polyketide synthase rstn3, the short chain dehydrogenase rstn4, the cyclase rstn5, the FAD-dependent monooxygenase rstn6 and the enoylreductase rstn7 are required to generate the first stable intermediate desmethylrestrictinol. Rstn3 with rstn7 biosynthesize the first polyketide chain intermediate that is reduced by rstn4, followed by epoxidation by rstn6 before 6-endo cyclization via epoxide opening by rstn5 leads to desmethylrestrictinol. The methyltransferase rstn1 then catalyzes the C4 O-methylation of desmethylrestrictinol to produce restrictinol, and the nonribosomal peptide synthetase rstn8 catalyzes the C3 esterification of restrictinol with glycine that leads to restricticin. In Aspergillus nomiae NRRL (strain ATCC 15546 / NRRL 13137 / CBS 260.88 / M93), this protein is FAD-dependent monooxygenase rstn6.